The primary structure comprises 118 residues: Large ribosomal subunit protein uL24 (118 aa).

This sequence belongs to the universal ribosomal protein uL24 family. Part of the 50S ribosomal subunit.

Its function is as follows. One of two assembly initiator proteins, it binds directly to the 5'-end of the 23S rRNA, where it nucleates assembly of the 50S subunit. In terms of biological role, one of the proteins that surrounds the polypeptide exit tunnel on the outside of the subunit. The protein is Large ribosomal subunit protein uL24 of Prochlorococcus marinus (strain MIT 9313).